We begin with the raw amino-acid sequence, 171 residues long: MDYRIRTSRDEDAALLPAIERSAGESFRLLPELAWIADAGVAGVDFHRRLIERGSHWLAEDADGQPVGFLAAERCADELHIAELSIAQAHQQQGLGRRLLERAVTYAHASHCRALTLTTFCDVPWNAPFYARLGFQRLTWQEAGERLRAILGHEQEIGFAADSRCAMRLVL.

The 160-residue stretch at 3–162 (YRIRTSRDED…HEQEIGFAAD (160 aa)) folds into the N-acetyltransferase domain. Residues 84–86 (LSI) and 128–130 (PFY) contribute to the CoA site.

Its function is as follows. Catalyzes the transfer of an acetyl group from acetyl coenzyme A (AcCoA) to an acceptor substrate and releases both CoA and the acetylated product. It can use a variety of substrates including spermidine, spermine and N(8)-acetylspermidine, 7-aminocephalosporanic acid, colistin and thiamine. This chain is Acetyltransferase PA2271, found in Pseudomonas aeruginosa (strain ATCC 15692 / DSM 22644 / CIP 104116 / JCM 14847 / LMG 12228 / 1C / PRS 101 / PAO1).